Reading from the N-terminus, the 298-residue chain is tRNA pseudouridine synthase B (298 aa).

Catalysis depends on D44, which acts as the Nucleophile.

This sequence belongs to the pseudouridine synthase TruB family. Type 1 subfamily.

The catalysed reaction is uridine(55) in tRNA = pseudouridine(55) in tRNA. Its function is as follows. Responsible for synthesis of pseudouridine from uracil-55 in the psi GC loop of transfer RNAs. The sequence is that of tRNA pseudouridine synthase B from Mycobacteroides abscessus (strain ATCC 19977 / DSM 44196 / CCUG 20993 / CIP 104536 / JCM 13569 / NCTC 13031 / TMC 1543 / L948) (Mycobacterium abscessus).